Here is a 416-residue protein sequence, read N- to C-terminus: Pre-mRNA-splicing factor slu-7 (416 aa).

Residues 1-34 (MPPPPPNRREQATAAPSSTDKSETGAGAARKEDN) are disordered. A CCHC-type zinc finger spans residues 95–112 (GACENCGAMGHKKKDCLE). Composition is skewed to basic and acidic residues over residues 168-179 (RRALQGDQKTPD) and 188-213 (DDKSGFKYDEESDMGRDRATTKQSMR). The segment at 168–213 (RRALQGDQKTPDGEGADGPEDDKSGFKYDEESDMGRDRATTKQSMR) is disordered.

Belongs to the SLU7 family. In terms of assembly, associated with the spliceosome.

It localises to the nucleus. Its function is as follows. Involved in pre-mRNA splicing. The sequence is that of Pre-mRNA-splicing factor slu-7 (slu-7) from Neurospora crassa (strain ATCC 24698 / 74-OR23-1A / CBS 708.71 / DSM 1257 / FGSC 987).